The chain runs to 332 residues: Phosphate acyltransferase (332 aa).

It belongs to the PlsX family. Homodimer. Probably interacts with PlsY.

It localises to the cytoplasm. The enzyme catalyses a fatty acyl-[ACP] + phosphate = an acyl phosphate + holo-[ACP]. The protein operates within lipid metabolism; phospholipid metabolism. Functionally, catalyzes the reversible formation of acyl-phosphate (acyl-PO(4)) from acyl-[acyl-carrier-protein] (acyl-ACP). This enzyme utilizes acyl-ACP as fatty acyl donor, but not acyl-CoA. This chain is Phosphate acyltransferase, found in Fusobacterium nucleatum subsp. nucleatum (strain ATCC 25586 / DSM 15643 / BCRC 10681 / CIP 101130 / JCM 8532 / KCTC 2640 / LMG 13131 / VPI 4355).